A 464-amino-acid polypeptide reads, in one-letter code: Asparagine--tRNA ligase (464 aa).

The protein belongs to the class-II aminoacyl-tRNA synthetase family. As to quaternary structure, homodimer.

It localises to the cytoplasm. It catalyses the reaction tRNA(Asn) + L-asparagine + ATP = L-asparaginyl-tRNA(Asn) + AMP + diphosphate + H(+). The protein is Asparagine--tRNA ligase of Xanthomonas axonopodis pv. citri (strain 306).